We begin with the raw amino-acid sequence, 515 residues long: mRNA export factor ICP27 homolog (515 aa).

4 residues coordinate Zn(2+): cysteine 230, histidine 335, cysteine 337, and cysteine 342. Residues 230–342 (CVFNDNGHGD…SNHKCDDVSC (113 aa)) form a CHC2-type zinc finger. Polar residues predominate over residues 398-408 (YSTNHDLPQTS). The interval 398–422 (YSTNHDLPQTSHRSHKNHGTPKVKS) is disordered. Residues 409–422 (HRSHKNHGTPKVKS) are compositionally biased toward basic residues.

Belongs to the HHV-1 ICP27 protein family.

Its subcellular location is the virion tegument. It is found in the virion. The protein localises to the host nucleus. The protein resides in the host cytoplasm. Immediate early (EI) protein that plays many roles during productive infection including regulation of viral gene expression and nuclear export of intronless viral RNAs. This is mRNA export factor ICP27 homolog from Human herpesvirus 6A (strain Uganda-1102) (HHV-6 variant A).